The sequence spans 400 residues: Exodeoxyribonuclease 7 large subunit (400 aa).

The protein belongs to the XseA family. Heterooligomer composed of large and small subunits.

The protein resides in the cytoplasm. It carries out the reaction Exonucleolytic cleavage in either 5'- to 3'- or 3'- to 5'-direction to yield nucleoside 5'-phosphates.. Functionally, bidirectionally degrades single-stranded DNA into large acid-insoluble oligonucleotides, which are then degraded further into small acid-soluble oligonucleotides. This Clostridium kluyveri (strain NBRC 12016) protein is Exodeoxyribonuclease 7 large subunit.